The following is a 117-amino-acid chain: MVKKNTKVSNKYIIDATAAVNDKIFDVAAFEKYLIDRIKVDGKTGNLGSSVVVSREGSSKIAVIAHIDFSGRYLKYLTKKFLKKHSLRDWLRVVSTKKGVYELRYYNVVVGNDEEEQ.

A phosphoserine mark is found at Ser-49 and Ser-50.

Belongs to the eukaryotic ribosomal protein eL22 family. In terms of assembly, component of the large ribosomal subunit (LSU). Mature yeast ribosomes consist of a small (40S) and a large (60S) subunit. The 40S small subunit contains 1 molecule of ribosomal RNA (18S rRNA) and at least 33 different proteins. The large 60S subunit contains 3 rRNA molecules (25S, 5.8S and 5S rRNA) and at least 46 different proteins.

The protein resides in the cytoplasm. It localises to the nucleus. Its subcellular location is the nucleolus. In terms of biological role, component of the ribosome, a large ribonucleoprotein complex responsible for the synthesis of proteins in the cell. The small ribosomal subunit (SSU) binds messenger RNAs (mRNAs) and translates the encoded message by selecting cognate aminoacyl-transfer RNA (tRNA) molecules. The large subunit (LSU) contains the ribosomal catalytic site termed the peptidyl transferase center (PTC), which catalyzes the formation of peptide bonds, thereby polymerizing the amino acids delivered by tRNAs into a polypeptide chain. The nascent polypeptides leave the ribosome through a tunnel in the LSU and interact with protein factors that function in enzymatic processing, targeting, and the membrane insertion of nascent chains at the exit of the ribosomal tunnel. The chain is Large ribosomal subunit protein eL22 (rpl22) from Schizosaccharomyces pombe (strain 972 / ATCC 24843) (Fission yeast).